The chain runs to 320 residues: Mitochondrial glycine transporter (320 aa).

Solcar repeat units lie at residues 8–92 (SKTT…LRQG), 121–205 (LSNW…LKRR), and 223–307 (SSSS…LILR). The next 6 helical transmembrane spans lie at 14–39 (FAAG…TRVQ), 67–93 (GTLP…RQGL), 127–152 (LATG…VRYE), 180–203 (GFGA…EQLK), 227–253 (INFV…KTRL), and 282–300 (GLGL…AWTV).

Belongs to the mitochondrial carrier (TC 2.A.29) family. SLC25A38 subfamily.

It localises to the mitochondrion inner membrane. The catalysed reaction is glycine(in) = glycine(out). Functionally, mitochondrial glycine transporter that imports glycine into the mitochondrial matrix. Plays an important role in providing glycine for the first enzymatic step in heme biosynthesis, the condensation of glycine with succinyl-CoA to produce 5-aminolevulinate (ALA) in the mitochondrial matrix. The sequence is that of Mitochondrial glycine transporter from Aspergillus fumigatus (strain CBS 144.89 / FGSC A1163 / CEA10) (Neosartorya fumigata).